The chain runs to 33 residues: Phosphoglycerate kinase (33 aa).

AMP is bound at residue Lys-13. Lys-13 is a binding site for ATP.

The protein belongs to the phosphoglycerate kinase family. Monomer. Requires Mg(2+) as cofactor.

It catalyses the reaction (2R)-3-phosphoglycerate + ATP = (2R)-3-phospho-glyceroyl phosphate + ADP. In Pseudotsuga menziesii (Douglas-fir), this protein is Phosphoglycerate kinase.